The chain runs to 95 residues: Costars family protein WS02710_H03 (95 aa).

This sequence belongs to the costars family.

The protein is Costars family protein WS02710_H03 of Picea sitchensis (Sitka spruce).